The primary structure comprises 314 residues: Porphobilinogen deaminase (314 aa).

Cys-249 is subject to S-(dipyrrolylmethanemethyl)cysteine.

Belongs to the HMBS family. Monomer. The cofactor is dipyrromethane.

The catalysed reaction is 4 porphobilinogen + H2O = hydroxymethylbilane + 4 NH4(+). It participates in porphyrin-containing compound metabolism; protoporphyrin-IX biosynthesis; coproporphyrinogen-III from 5-aminolevulinate: step 2/4. Functionally, tetrapolymerization of the monopyrrole PBG into the hydroxymethylbilane pre-uroporphyrinogen in several discrete steps. The chain is Porphobilinogen deaminase from Brucella anthropi (strain ATCC 49188 / DSM 6882 / CCUG 24695 / JCM 21032 / LMG 3331 / NBRC 15819 / NCTC 12168 / Alc 37) (Ochrobactrum anthropi).